A 355-amino-acid chain; its full sequence is Glucose-6-phosphatase 2 (355 aa).

Topologically, residues 1 to 24 (MDFLHRSGVLIIHHLQEDYRTYYG) are lumenal. The helical transmembrane segment at 25 to 45 (FLNFMSNVGDPRNIFSIYFPL) threads the bilayer. Topologically, residues 46-56 (WFQLNQNVGTK) are cytoplasmic. Residues 57–77 (MIWVAVIGDWFNLIFKWILFG) traverse the membrane as a helical segment. Topologically, residues 78–115 (HRPYWWIQETEIYPNHSSPCLEQFPTTCETGPGSPSGH) are lumenal. Substrate is bound at residue Arg-79. A glycan (N-linked (GlcNAc...) asparagine) is linked at Asn-92. His-115 acts as the Proton donor in catalysis. The chain crosses the membrane as a helical span at residues 116 to 136 (AMGSSCVWYVMVTAALSYTIS). Residues 137–146 (RMEESSVTLH) are Cytoplasmic-facing. The helical transmembrane segment at 147 to 167 (RLTWSFLWSVFWLIQISVCIS) threads the bilayer. Residue Arg-168 is a topological domain, lumenal. A substrate-binding site is contributed by Arg-168. A helical membrane pass occupies residues 169–189 (VFIATHFPHQVILGVIGGMLV). Residue His-174 is the Nucleophile of the active site. The Cytoplasmic segment spans residues 190 to 211 (AEAFEHTPGVHMASLSVYLKTN). A helical membrane pass occupies residues 212-232 (VFLFLFALGFYLLLRLFGIDL). Over 233-252 (LWSVPIAKKWCANPDWIHID) the chain is Lumenal. A helical transmembrane segment spans residues 253–273 (STPFAGLVRNLGVLFGLGFAI). At 274–290 (NSEMFLRSCQGENGTKP) the chain is on the cytoplasmic side. The chain crosses the membrane as a helical span at residues 291–307 (SFRLLCALTSLTTMQLY). At 308 to 318 (RFIKIPTHAEP) the chain is on the lumenal side. The chain crosses the membrane as a helical span at residues 319 to 339 (LFYLLSFCKSASIPLMVVALI). Over 340 to 355 (PYCVHMLMRPGDKKTK) the chain is Cytoplasmic. The Prevents secretion from ER signature appears at 352–355 (KKTK).

The protein belongs to the glucose-6-phosphatase family. Post-translationally, N-glycosylated; the non-glycosylated form is more unstable and is degraded through the proteasome. Specifically expressed in pancreatic islet cells, in particular those of beta-cell origin. Not detected in testis, kidney, muscle, liver, lung, spleen, brain, pituitary, gastric fundus or heart.

It is found in the endoplasmic reticulum membrane. It catalyses the reaction D-glucose 6-phosphate + H2O = D-glucose + phosphate. It functions in the pathway carbohydrate biosynthesis; gluconeogenesis. Its function is as follows. May hydrolyze glucose-6-phosphate to glucose in the endoplasmic reticulum. May be responsible for glucose production through glycogenolysis and gluconeogenesis. This is Glucose-6-phosphatase 2 (G6pc2) from Mus musculus (Mouse).